We begin with the raw amino-acid sequence, 314 residues long: Vacuolar membrane protein FOSTERSB_4073 (314 aa).

Residues 32-60 (KPTSSVVSETSSKSLPSLTSSAFSTSSGA) form a disordered region. A helical transmembrane segment spans residues 93–113 (VYIAVGAVIGAIFISILIWWL). Ser148, Ser254, and Ser274 each carry phosphoserine. Residues 240 to 309 (EERKLNLNRP…PSMFLDDVLN (70 aa)) form a disordered region. The segment covering 254-269 (SPERKEKKINSMEGYH) has biased composition (basic and acidic residues).

This sequence belongs to the PRM5 family.

The protein resides in the vacuole membrane. This Saccharomyces cerevisiae (strain FostersB) (Baker's yeast) protein is Vacuolar membrane protein FOSTERSB_4073.